Consider the following 328-residue polypeptide: 5,10-methylenetetrahydromethanopterin reductase (328 aa).

The protein belongs to the mer family.

The protein resides in the cytoplasm. It catalyses the reaction 5-methyl-5,6,7,8-tetrahydromethanopterin + oxidized coenzyme F420-(gamma-L-Glu)(n) + H(+) = 5,10-methylenetetrahydromethanopterin + reduced coenzyme F420-(gamma-L-Glu)(n). Its pathway is one-carbon metabolism; methanogenesis from CO(2); methyl-coenzyme M from 5,10-methylene-5,6,7,8-tetrahydromethanopterin: step 1/2. Its function is as follows. Catalyzes the reversible reduction of methylene-H(4)MPT to methyl-H(4)MPT. The chain is 5,10-methylenetetrahydromethanopterin reductase from Methanosarcina barkeri (strain Fusaro / DSM 804).